The following is a 421-amino-acid chain: UDP-N-acetylglucosamine 1-carboxyvinyltransferase (421 aa).

23 to 24 is a binding site for phosphoenolpyruvate; sequence KN. A UDP-N-acetyl-alpha-D-glucosamine-binding site is contributed by Arg-92. The Proton donor role is filled by Cys-116. The residue at position 116 (Cys-116) is a 2-(S-cysteinyl)pyruvic acid O-phosphothioketal. Residues 121–125, 161–164, Asp-306, and Ile-328 each bind UDP-N-acetyl-alpha-D-glucosamine; these read RPVDL and KVSV.

Belongs to the EPSP synthase family. MurA subfamily.

The protein localises to the cytoplasm. It catalyses the reaction phosphoenolpyruvate + UDP-N-acetyl-alpha-D-glucosamine = UDP-N-acetyl-3-O-(1-carboxyvinyl)-alpha-D-glucosamine + phosphate. The protein operates within cell wall biogenesis; peptidoglycan biosynthesis. Cell wall formation. Adds enolpyruvyl to UDP-N-acetylglucosamine. The chain is UDP-N-acetylglucosamine 1-carboxyvinyltransferase from Vibrio campbellii (strain ATCC BAA-1116).